The sequence spans 297 residues: Phenylalanine-4-hydroxylase (297 aa).

Residues H138, H143, and E184 each coordinate Fe cation.

This sequence belongs to the biopterin-dependent aromatic amino acid hydroxylase family. In terms of assembly, monomer. It depends on Fe(2+) as a cofactor.

It catalyses the reaction (6R)-L-erythro-5,6,7,8-tetrahydrobiopterin + L-phenylalanine + O2 = (4aS,6R)-4a-hydroxy-L-erythro-5,6,7,8-tetrahydrobiopterin + L-tyrosine. The protein operates within amino-acid degradation; L-phenylalanine degradation; acetoacetate and fumarate from L-phenylalanine: step 1/6. The protein is Phenylalanine-4-hydroxylase (phhA) of Chromobacterium violaceum (strain ATCC 12472 / DSM 30191 / JCM 1249 / CCUG 213 / NBRC 12614 / NCIMB 9131 / NCTC 9757 / MK).